Consider the following 509-residue polypeptide: MADAEVITFPKKHKKKKDRKPLQEDDVAEIQHAEEFLIKPESKVAQLDTSQWPLLLKNFDKLNVRTAHYTPLPCGSNPLKREIGDYIRTGFINLDKPSNPSSHEVVAWIRRILRVEKTGHSGTLDPKVTGCLIVCIERATRLVKSQQSAGKEYVGIVRLHNAIEGGTQLSRALETLTGALFQRPPLIAAVKRQLRVRTIYESKMIEYDPERRLGIFWVSCEAGTYIRTLCVHLGLLLGVGGQMQELRRVRSGVMSEKDHMVTMHDVLDAQWLYDNHKDESYLRRVVYPLEKLLTSHKRLVMKDSAVNAICYGAKIMLPGLLRYEDGIEVNQEIVVITTKGEAICMAIALMTTAVISTCDHGIVAKIKRVIMERDTYPRKWGLGPKASQKKMMIKQGLLDKHGKPTDNTPATWKQDYIDYSDSGKNTLVTEAVQAPQLAAEAVNVIKRKRDSESESDETPTVPQLKEKKKKKDKKPKTVLESGGETGDGDNDTTKKKKKKKVKVVEEMSE.

Positions 1-24 (MADAEVITFPKKHKKKKDRKPLQE) are disordered. An N-acetylalanine modification is found at Ala2. Residues 2–21 (ADAEVITFPKKHKKKKDRKP) are nucleolar localization. Positions 10–19 (PKKHKKKKDR) are enriched in basic residues. Residues Lys20, Lys39, and Lys43 each participate in a glycyl lysine isopeptide (Lys-Gly) (interchain with G-Cter in SUMO2) cross-link. Asp125 serves as the catalytic Nucleophile. Residue Lys191 forms a Glycyl lysine isopeptide (Lys-Gly) (interchain with G-Cter in SUMO2) linkage. A PUA domain is found at 297–372 (KRLVMKDSAV…VAKIKRVIME (76 aa)). Phosphoserine is present on Ser387. Residue Lys394 forms a Glycyl lysine isopeptide (Lys-Gly) (interchain with G-Cter in SUMO2) linkage. Lys413 is covalently cross-linked (Glycyl lysine isopeptide (Lys-Gly) (interchain with G-Cter in SUMO1); alternate). Lys413 is covalently cross-linked (Glycyl lysine isopeptide (Lys-Gly) (interchain with G-Cter in SUMO2); alternate). Residue Lys424 forms a Glycyl lysine isopeptide (Lys-Gly) (interchain with G-Cter in SUMO2) linkage. Positions 446–509 (KRKRDSESES…KVKVVEEMSE (64 aa)) are nuclear and nucleolar localization. Residues 447 to 509 (RKRDSESESD…KVKVVEEMSE (63 aa)) form a disordered region. Phosphoserine occurs at positions 451, 453, and 455. Thr458 bears the Phosphothreonine mark. The span at 466-476 (EKKKKKDKKPK) shows a compositional bias: basic residues. Residue Ser481 is modified to Phosphoserine. Thr485 carries the post-translational modification Phosphothreonine. Ser508 carries the phosphoserine modification.

This sequence belongs to the pseudouridine synthase TruB family. As to quaternary structure, part of the H/ACA small nucleolar ribonucleoprotein (H/ACA snoRNP) complex, which contains NHP2/NOLA2, GAR1/NOLA1, NOP10/NOLA3, and DKC1/NOLA4, which is presumed to be the catalytic subunit. The complex contains a stable core formed by binding of one or two NOP10-DKC1 heterodimers to NHP2; GAR1 subsequently binds to this core via DKC1. The complex binds a box H/ACA small nucleolar RNA (snoRNA), which may target the specific site of modification within the RNA substrate. During assembly, the complex contains NAF1 instead of GAR1/NOLA1. The complex also interacts with TERC, which contains a 3'-terminal domain related to the box H/ACA snoRNAs. Specific interactions with snoRNAs or TERC are mediated by GAR1 and NHP2. Associates with NOLC1/NOPP140. H/ACA snoRNPs interact with the SMN complex, consisting of SMN1 or SMN2, GEMIN2/SIP1, DDX20/GEMIN3, and GEMIN4. This is mediated by interaction between GAR1 and SMN1 or SMN2. The SMN complex may be required for correct assembly of the H/ACA snoRNP complex. Component of the telomerase holoenzyme complex composed of one molecule of TERT, one molecule of WRAP53/TCAB1, two molecules of H/ACA ribonucleoprotein complex subunits DKC1, NOP10, NHP2 and GAR1, and a telomerase RNA template component (TERC). The telomerase holoenzyme complex is associated with TEP1, SMG6/EST1A and POT1. Interacts with SHQ1; this interaction may lead to the stabilization of DKC1, from the time of its synthesis until its association with NOP10, NHP2, and NAF1 at the nascent H/ACA RNA. Interacts with HMBOX1. Interacts with DHX36. Ubiquitously expressed, with elevated levels in Purkinje cells, the olfactory bulb, and Leydig cells of the testis.

It localises to the nucleus. It is found in the nucleolus. The protein localises to the cajal body. The catalysed reaction is uridine in 5S rRNA = pseudouridine in 5S rRNA. In terms of biological role, catalytic subunit of H/ACA small nucleolar ribonucleoprotein (H/ACA snoRNP) complex, which catalyzes pseudouridylation of rRNA. This involves the isomerization of uridine such that the ribose is subsequently attached to C5, instead of the normal N1. Each rRNA can contain up to 100 pseudouridine ('psi') residues, which may serve to stabilize the conformation of rRNAs. Required for ribosome biogenesis and telomere maintenance. Also required for correct processing or intranuclear trafficking of TERC, the RNA component of the telomerase reverse transcriptase (TERT) holoenzyme. This Mus musculus (Mouse) protein is H/ACA ribonucleoprotein complex subunit DKC1 (Dkc1).